A 593-amino-acid polypeptide reads, in one-letter code: Probable E3 ubiquitin-protein ligase ARI2 (593 aa).

Positions 120-334 (SMMSCDICVE…ISGHSCGRFQ (215 aa)) are TRIAD supradomain. Residues Cys-124, Cys-127, Cys-141, His-143, Cys-146, Cys-149, Cys-168, Cys-173, Cys-215, Cys-221, Cys-237, Cys-239, Cys-244, Cys-247, His-252, Cys-257, Cys-284, and Cys-287 each contribute to the Zn(2+) site. The RING-type 1 zinc-finger motif lies at 124-173 (CDICVEDVPGYQLTRMDCGHSFCNNCWTGHFTVKINEGQSKRIICMAHKC). Residues 195-257 (EKFDRFLLES…SSQAHSPCSC (63 aa)) form an IBR-type zinc finger. An RING-type 2; atypical zinc finger spans residues 284 to 312 (CPKCHKPVEKNGGCNLVTCLCRQSFCWLC). Residue Cys-297 is part of the active site. Zn(2+)-binding residues include Cys-302, Cys-304, Cys-309, Cys-312, His-320, and Cys-330.

The protein belongs to the RBR family. Ariadne subfamily. Requires Zn(2+) as cofactor. Ubiquitous.

It catalyses the reaction [E2 ubiquitin-conjugating enzyme]-S-ubiquitinyl-L-cysteine + [acceptor protein]-L-lysine = [E2 ubiquitin-conjugating enzyme]-L-cysteine + [acceptor protein]-N(6)-ubiquitinyl-L-lysine.. Its pathway is protein modification; protein ubiquitination. Functionally, might act as an E3 ubiquitin-protein ligase, or as part of E3 complex, which accepts ubiquitin from specific E2 ubiquitin-conjugating enzymes and then transfers it to substrates. The sequence is that of Probable E3 ubiquitin-protein ligase ARI2 (ARI2) from Arabidopsis thaliana (Mouse-ear cress).